The primary structure comprises 121 residues: Flagellar protein FliT (121 aa).

Residues 1–50 are required for homodimerization; that stretch reads MNNAPHLYFAWQQLVEKSQLMLRLATEEQWDELIASEMAYVNAVQEIAHL. A fliD binding region spans residues 60 to 98; it reads MQEQLRPMLHLILDNESKVKQLLQIRMDELAKLVGQSSV.

The protein belongs to the FliT family. In terms of assembly, homodimer. Interacts with FliD and FlhC.

It is found in the cytoplasm. The protein resides in the cytosol. Its function is as follows. Dual-function protein that regulates the transcription of class 2 flagellar operons and that also acts as an export chaperone for the filament-capping protein FliD. As a transcriptional regulator, acts as an anti-FlhDC factor; it directly binds FlhC, thus inhibiting the binding of the FlhC/FlhD complex to class 2 promoters, resulting in decreased expression of class 2 flagellar operons. As a chaperone, effects FliD transition to the membrane by preventing its premature polymerization, and by directing it to the export apparatus. This Escherichia coli O17:K52:H18 (strain UMN026 / ExPEC) protein is Flagellar protein FliT.